Consider the following 402-residue polypeptide: Acetyl-CoA acetyltransferase (402 aa).

The active-site Acyl-thioester intermediate is cysteine 90. Positions 185 and 230 each coordinate CoA. Tyrosine 185 contacts K(+). Residue alanine 250 coordinates K(+). CoA is bound at residue serine 251. Position 348 (valine 348) interacts with K(+). Active-site proton acceptor residues include histidine 352 and cysteine 382.

Belongs to the thiolase-like superfamily. Thiolase family. Homotetramer.

Its subcellular location is the cytoplasm. The protein resides in the cytosol. It catalyses the reaction 2 acetyl-CoA = acetoacetyl-CoA + CoA. Its pathway is metabolic intermediate biosynthesis; (R)-mevalonate biosynthesis; (R)-mevalonate from acetyl-CoA: step 1/3. In terms of biological role, acetyl-CoA acetyltransferase; part of the first module of ergosterol biosynthesis pathway that includes the early steps of the pathway, conserved across all eukaryotes, and which results in the formation of mevalonate from acetyl-coenzyme A (acetyl-CoA). ERG10 catalyzes the formation of acetoacetyl-CoA from acetyl-CoA. The first module starts with the action of the cytosolic acetyl-CoA acetyltransferase ERG10 that catalyzes the formation of acetoacetyl-CoA. The hydroxymethylglutaryl-CoA synthase ERG13 then condenses acetyl-CoA with acetoacetyl-CoA to form HMG-CoA. The 3-hydroxy-3-methylglutaryl-coenzyme A (HMG-CoA) reductase HMG1 finally reduces HMG-CoA to produce mevalonate. The chain is Acetyl-CoA acetyltransferase from Candida albicans (strain SC5314 / ATCC MYA-2876) (Yeast).